The chain runs to 462 residues: N-myc proto-oncogene protein (462 aa).

Residues Leu-19 to Glu-47 form an interaction with AURKA region. An interaction with AURKA and FBXW7 region spans residues Leu-61–Gly-90. The 9aaTAD motif lies at Asn-76–Glu-85. Disordered regions lie at residues Lys-134–Pro-177, Ala-232–Asn-289, and Ala-332–Gln-390. 2 stretches are compositionally biased toward low complexity: residues Gly-143 to Leu-176 and Ala-232 to Ser-244. The segment covering Thr-257 to Asp-276 has biased composition (acidic residues). Residues Ser-259 and Ser-261 each carry the phosphoserine; by CK2 modification. Residues Glu-379 to Leu-431 enclose the bHLH domain. The leucine-zipper stretch occupies residues Leu-431–Leu-452.

Efficient DNA binding requires dimerization with another bHLH protein. Binds DNA as a heterodimer with MAX. Interacts with KDM5A, KDM5B and HUWE1. Interacts with MYCNOS. Interacts with AURKA; interaction is phospho-independent and triggers AURKA activation; AURKA competes with FBXW7 for binding to unphosphorylated MYCN but not for binding to unphosphorylated MYCN. Interacts with FBXW7; FBXW7 competes with AURKA for binding to unphosphorylated MYCN but not for binding to phosphorylated MYCN. Post-translationally, phosphorylated by GSK3-beta which may promote its degradation. Phosphorylated by AURKA.

The protein resides in the nucleus. Its function is as follows. Positively regulates the transcription of MYCNOS in neuroblastoma cells. The chain is N-myc proto-oncogene protein (Mycn) from Mus musculus (Mouse).